The chain runs to 677 residues: Beta-galactosidase (677 aa).

Positions 1-23 are cleaved as a signal peptide; that stretch reads MPGFLVRILPLLLVLLLLGPTRG. Positions 24–28 are excised as a propeptide; the sequence is LRNAT. N-linked (GlcNAc...) asparagine glycosylation occurs at Asn-26. Substrate is bound by residues Tyr-83, Glu-129, and Asn-187. The active-site Proton donor is the Glu-188. Cys-195 and Cys-230 form a disulfide bridge. A glycan (N-linked (GlcNAc...) asparagine) is linked at Asn-247. Glu-268 serves as the catalytic Nucleophile. Tyr-333 contributes to the substrate binding site. 5 N-linked (GlcNAc...) asparagine glycosylation sites follow: Asn-464, Asn-498, Asn-542, Asn-545, and Asn-555. Cys-626 and Cys-634 form a disulfide bridge. Residues 650 to 677 are disordered; it reads YDHPSKPVEKRLMPPPPQKNKDSWLDHV. 2 stretches are compositionally biased toward basic and acidic residues: residues 652–661 and 668–677; these read HPSKPVEKRL and KNKDSWLDHV.

Belongs to the glycosyl hydrolase 35 family. Homodimer. May form higher multimers. As to expression, detected in placenta (at protein level). Detected in fibroblasts and testis.

It localises to the lysosome. It is found in the cytoplasm. The protein localises to the perinuclear region. The enzyme catalyses Hydrolysis of terminal non-reducing beta-D-galactose residues in beta-D-galactosides.. In terms of biological role, cleaves beta-linked terminal galactosyl residues from gangliosides, glycoproteins, and glycosaminoglycans. Its function is as follows. Has no beta-galactosidase catalytic activity, but plays functional roles in the formation of extracellular elastic fibers (elastogenesis) and in the development of connective tissue. Seems to be identical to the elastin-binding protein (EBP), a major component of the non-integrin cell surface receptor expressed on fibroblasts, smooth muscle cells, chondroblasts, leukocytes, and certain cancer cell types. In elastin producing cells, associates with tropoelastin intracellularly and functions as a recycling molecular chaperone which facilitates the secretions of tropoelastin and its assembly into elastic fibers. In Homo sapiens (Human), this protein is Beta-galactosidase (GLB1).